Here is a 162-residue protein sequence, read N- to C-terminus: Probable metalloprotease y4jG (162 aa).

The region spanning 9–147 (TVALPRDCVS…YRLDAKANWN (139 aa)) is the MPN domain. Residues His94, His96, and Asp107 each contribute to the Zn(2+) site.

Belongs to the peptidase M67B family.

In Sinorhizobium fredii (strain NBRC 101917 / NGR234), this protein is Probable metalloprotease y4jG.